We begin with the raw amino-acid sequence, 274 residues long: NADPH-dependent 7-cyano-7-deazaguanine reductase (274 aa).

A substrate-binding site is contributed by 80–82; that stretch reads VES. 82–83 is a binding site for NADPH; it reads SK. Catalysis depends on cysteine 181, which acts as the Thioimide intermediate. The Proton donor role is filled by aspartate 188. 220–221 contributes to the substrate binding site; that stretch reads HE. Position 249-250 (249-250) interacts with NADPH; that stretch reads RG.

It belongs to the GTP cyclohydrolase I family. QueF type 2 subfamily. Homodimer.

The protein resides in the cytoplasm. The catalysed reaction is 7-aminomethyl-7-carbaguanine + 2 NADP(+) = 7-cyano-7-deazaguanine + 2 NADPH + 3 H(+). Its pathway is tRNA modification; tRNA-queuosine biosynthesis. In terms of biological role, catalyzes the NADPH-dependent reduction of 7-cyano-7-deazaguanine (preQ0) to 7-aminomethyl-7-deazaguanine (preQ1). This chain is NADPH-dependent 7-cyano-7-deazaguanine reductase, found in Burkholderia thailandensis (strain ATCC 700388 / DSM 13276 / CCUG 48851 / CIP 106301 / E264).